Consider the following 777-residue polypeptide: Histone-lysine N-methyltransferase set9 (777 aa).

Positions cysteine 117–serine 231 constitute an SET domain. Disordered stretches follow at residues alanine 263–proline 414 and arginine 682–tyrosine 718. The segment covering threonine 291–valine 301 has biased composition (polar residues). Residues threonine 323–glycine 337 are compositionally biased toward low complexity. Composition is skewed to polar residues over residues threonine 371–glutamate 405 and lysine 688–glycine 698.

It belongs to the class V-like SAM-binding methyltransferase superfamily. Histone-lysine methyltransferase family. Suvar4-20 subfamily.

Its subcellular location is the nucleus. The protein localises to the chromosome. The enzyme catalyses L-lysyl(20)-[histone H4] + 3 S-adenosyl-L-methionine = N(6),N(6),N(6)-trimethyl-L-lysyl(20)-[histone H4] + 3 S-adenosyl-L-homocysteine + 3 H(+). Histone methyltransferase that trimethylates 'Lys-20' of histone H4 to form H4K20me3. This is Histone-lysine N-methyltransferase set9 (hlm-1) from Neurospora crassa (strain ATCC 24698 / 74-OR23-1A / CBS 708.71 / DSM 1257 / FGSC 987).